The chain runs to 289 residues: Pantothenate synthetase (289 aa).

33-40 lines the ATP pocket; that stretch reads MGNLHDGH. Residue H40 is the Proton donor of the active site. A (R)-pantoate-binding site is contributed by Q64. Q64 is a beta-alanine binding site. Residue 155 to 158 coordinates ATP; it reads GKKD. Residue Q161 participates in (R)-pantoate binding. Residues A184 and 192 to 195 contribute to the ATP site; that span reads LSSR.

This sequence belongs to the pantothenate synthetase family. Homodimer.

Its subcellular location is the cytoplasm. It catalyses the reaction (R)-pantoate + beta-alanine + ATP = (R)-pantothenate + AMP + diphosphate + H(+). It functions in the pathway cofactor biosynthesis; (R)-pantothenate biosynthesis; (R)-pantothenate from (R)-pantoate and beta-alanine: step 1/1. Catalyzes the condensation of pantoate with beta-alanine in an ATP-dependent reaction via a pantoyl-adenylate intermediate. The polypeptide is Pantothenate synthetase (Acidovorax sp. (strain JS42)).